The following is a 142-amino-acid chain: C-type lectin 13 (142 aa).

Residues Met1–Ala23 form the signal peptide. 3 disulfide bridges follow: Cys25/Cys36, Cys53/Cys138, and Cys115/Cys130. In terms of domain architecture, C-type lectin spans Tyr32 to Lys139.

Belongs to the snaclec family. In terms of assembly, heteromultimer; disulfide-linked. Expressed by the venom gland.

It is found in the secreted. In terms of biological role, interferes with one step of hemostasis (modulation of platelet aggregation, or coagulation cascade, for example). This Crotalus adamanteus (Eastern diamondback rattlesnake) protein is C-type lectin 13.